The following is a 274-amino-acid chain: Formamidopyrimidine-DNA glycosylase (274 aa).

Residue Pro-2 is the Schiff-base intermediate with DNA of the active site. The active-site Proton donor is Glu-3. Lys-58 (proton donor; for beta-elimination activity) is an active-site residue. DNA-binding residues include His-91, Arg-110, and Lys-152. The segment at 237–271 (KVYGRKNLPCLVCENKIETVVIAGRHSAFCPHCQP) adopts an FPG-type zinc-finger fold. The active-site Proton donor; for delta-elimination activity is Arg-261.

This sequence belongs to the FPG family. Monomer. Requires Zn(2+) as cofactor.

It catalyses the reaction Hydrolysis of DNA containing ring-opened 7-methylguanine residues, releasing 2,6-diamino-4-hydroxy-5-(N-methyl)formamidopyrimidine.. It carries out the reaction 2'-deoxyribonucleotide-(2'-deoxyribose 5'-phosphate)-2'-deoxyribonucleotide-DNA = a 3'-end 2'-deoxyribonucleotide-(2,3-dehydro-2,3-deoxyribose 5'-phosphate)-DNA + a 5'-end 5'-phospho-2'-deoxyribonucleoside-DNA + H(+). Involved in base excision repair of DNA damaged by oxidation or by mutagenic agents. Acts as a DNA glycosylase that recognizes and removes damaged bases. Has a preference for oxidized purines, such as 7,8-dihydro-8-oxoguanine (8-oxoG). Has AP (apurinic/apyrimidinic) lyase activity and introduces nicks in the DNA strand. Cleaves the DNA backbone by beta-delta elimination to generate a single-strand break at the site of the removed base with both 3'- and 5'-phosphates. The protein is Formamidopyrimidine-DNA glycosylase of Legionella pneumophila (strain Lens).